The sequence spans 363 residues: Class I histocompatibility antigen, Gogo-B*0201 alpha chain (363 aa).

The N-terminal stretch at 1-24 is a signal peptide; sequence MQVTAPRTLLLLLSAALALTETWA. The interval 25–114 is alpha-1; the sequence is GSHSMRYFHT…LRGYYNQSED (90 aa). Over 25–308 the chain is Extracellular; the sequence is GSHSMRYFHT…EPSSQSTIPI (284 aa). N-linked (GlcNAc...) asparagine glycosylation is present at Asn-110. Residues 115–206 are alpha-2; the sequence is GSHTIQRMYG…ENGKETLQRA (92 aa). Intrachain disulfides connect Cys-125–Cys-188 and Cys-227–Cys-283. Residues 207 to 298 are alpha-3; that stretch reads DPPKTHVTHH…GLPEPLTLRW (92 aa). The Ig-like C1-type domain maps to 209-297; sequence PKTHVTHHPI…EGLPEPLTLR (89 aa). The connecting peptide stretch occupies residues 299 to 308; it reads EPSSQSTIPI. A helical transmembrane segment spans residues 309 to 333; sequence VGIVAGLAVLVVTVAVVAVVAAVMC. The Cytoplasmic portion of the chain corresponds to 334 to 363; that stretch reads RRKSSGGKGGSYSQAASSDSAQGSDVSLTA. Residues 336–363 form a disordered region; sequence KSSGGKGGSYSQAASSDSAQGSDVSLTA. The span at 344–363 shows a compositional bias: low complexity; it reads SYSQAASSDSAQGSDVSLTA.

This sequence belongs to the MHC class I family. As to quaternary structure, heterodimer of an alpha chain and a beta chain (beta-2-microglobulin).

The protein resides in the membrane. Its function is as follows. Involved in the presentation of foreign antigens to the immune system. In Gorilla gorilla gorilla (Western lowland gorilla), this protein is Class I histocompatibility antigen, Gogo-B*0201 alpha chain.